A 320-amino-acid polypeptide reads, in one-letter code: o-succinylbenzoate synthase (320 aa).

The active-site Proton donor is Lys133. Mg(2+) contacts are provided by Asp161, Glu190, and Asp213. Catalysis depends on Lys235, which acts as the Proton acceptor.

Belongs to the mandelate racemase/muconate lactonizing enzyme family. MenC type 1 subfamily. The cofactor is a divalent metal cation.

The catalysed reaction is (1R,6R)-6-hydroxy-2-succinyl-cyclohexa-2,4-diene-1-carboxylate = 2-succinylbenzoate + H2O. It participates in quinol/quinone metabolism; 1,4-dihydroxy-2-naphthoate biosynthesis; 1,4-dihydroxy-2-naphthoate from chorismate: step 4/7. Its pathway is quinol/quinone metabolism; menaquinone biosynthesis. Its function is as follows. Converts 2-succinyl-6-hydroxy-2,4-cyclohexadiene-1-carboxylate (SHCHC) to 2-succinylbenzoate (OSB). This is o-succinylbenzoate synthase from Escherichia coli O17:K52:H18 (strain UMN026 / ExPEC).